The primary structure comprises 287 residues: 4-hydroxybenzoate octaprenyltransferase (287 aa).

The next 7 membrane-spanning stretches (helical) occupy residues 30 to 50, 92 to 112, 133 to 153, 158 to 178, 207 to 227, 232 to 252, and 266 to 286; these read ALWI…FALG, IAIA…LNGL, FFAI…PMAF, DTVP…SVAY, VLAI…LGAA, WPYW…YTLI, and HNNW…ALAV.

This sequence belongs to the UbiA prenyltransferase family. The cofactor is Mg(2+).

The protein resides in the cell inner membrane. It catalyses the reaction all-trans-octaprenyl diphosphate + 4-hydroxybenzoate = 4-hydroxy-3-(all-trans-octaprenyl)benzoate + diphosphate. Its pathway is cofactor biosynthesis; ubiquinone biosynthesis. Its function is as follows. Catalyzes the prenylation of para-hydroxybenzoate (PHB) with an all-trans polyprenyl group. Mediates the second step in the final reaction sequence of ubiquinone-8 (UQ-8) biosynthesis, which is the condensation of the polyisoprenoid side chain with PHB, generating the first membrane-bound Q intermediate 3-octaprenyl-4-hydroxybenzoate. The chain is 4-hydroxybenzoate octaprenyltransferase from Burkholderia mallei (strain NCTC 10247).